Reading from the N-terminus, the 35-residue chain is uncharacterized protein (35 aa).

An N-terminal signal peptide occupies residues 1–25 (MTERKLLQLLRRPFISLSLFTALRA).

This is an uncharacterized protein from Saccharomyces cerevisiae (strain ATCC 204508 / S288c) (Baker's yeast).